A 262-amino-acid chain; its full sequence is Tryptophan synthase alpha chain (262 aa).

Residues Glu-51 and Asp-62 each act as proton acceptor in the active site.

It belongs to the TrpA family. In terms of assembly, tetramer of two alpha and two beta chains.

The enzyme catalyses (1S,2R)-1-C-(indol-3-yl)glycerol 3-phosphate + L-serine = D-glyceraldehyde 3-phosphate + L-tryptophan + H2O. The protein operates within amino-acid biosynthesis; L-tryptophan biosynthesis; L-tryptophan from chorismate: step 5/5. Functionally, the alpha subunit is responsible for the aldol cleavage of indoleglycerol phosphate to indole and glyceraldehyde 3-phosphate. The protein is Tryptophan synthase alpha chain of Oceanobacillus iheyensis (strain DSM 14371 / CIP 107618 / JCM 11309 / KCTC 3954 / HTE831).